Consider the following 270-residue polypeptide: Protein N-terminal and lysine N-methyltransferase EFM7 (270 aa).

The segment at 1–45 (MSDIESLNGGDLFAEPSDFYKPPPEPHFATYTRDDVPESSTSQQK) is disordered. Residues Trp63, 89 to 91 (GAA), Asp111, Trp158, and Ser182 contribute to the S-adenosyl-L-methionine site.

The protein belongs to the class I-like SAM-binding methyltransferase superfamily. EFM7 family.

It localises to the cytoplasm. Its function is as follows. S-adenosyl-L-methionine-dependent protein methyltransferase that trimethylates the N-terminal glycine 'Gly-2' of elongation factor 1-alpha, before also catalyzing the mono- and dimethylation of 'Lys-3'. This is Protein N-terminal and lysine N-methyltransferase EFM7 from Kluyveromyces lactis (strain ATCC 8585 / CBS 2359 / DSM 70799 / NBRC 1267 / NRRL Y-1140 / WM37) (Yeast).